Reading from the N-terminus, the 89-residue chain is Defensin-like protein 250 (89 aa).

Positions 1 to 23 are cleaved as a signal peptide; the sequence is MKLAAIFLVSCVLLSLLPSLTIA. 4 disulfide bridges follow: Cys-29-Cys-86, Cys-40-Cys-69, Cys-48-Cys-79, and Cys-67-Cys-81.

Belongs to the DEFL family.

Its subcellular location is the secreted. The polypeptide is Defensin-like protein 250 (SCRL8) (Arabidopsis thaliana (Mouse-ear cress)).